The following is a 201-amino-acid chain: E3 ubiquitin-protein ligase LAP (201 aa).

Over 1–92 (MSTIVDMVDV…RDCHDSLLVN (92 aa)) the chain is Cytoplasmic. The RING-CH-type zinc finger occupies 9-69 (DVSLVDKCCW…AICETPYNVK (61 aa)). Zn(2+) contacts are provided by cysteine 17, cysteine 20, cysteine 31, cysteine 33, histidine 41, cysteine 44, cysteine 59, and cysteine 62. The chain crosses the membrane as a helical span at residues 93-113 (LPLCLIVGGISTYTLVSVEII). Residues 114-123 (KLMESEETSE) are Lumenal-facing. The helical transmembrane segment at 124–144 (LTKVFLVTSFLGPFIVTVLSA) threads the bilayer. The Cytoplasmic segment spans residues 145-201 (LRTCIDCRTYFLTTRKRNTIHTLQELEDDDDDDDDDDDDDDEEYADAVEEIIIGPSN). Residues 168–188 (QELEDDDDDDDDDDDDDDEEY) form a disordered region. Over residues 169-188 (ELEDDDDDDDDDDDDDDEEY) the composition is skewed to acidic residues.

This sequence belongs to the poxviridae LAP protein family.

The protein localises to the host membrane. The protein resides in the host Golgi apparatus. Its subcellular location is the host trans-Golgi network membrane. It localises to the host early endosome membrane. The enzyme catalyses S-ubiquitinyl-[E2 ubiquitin-conjugating enzyme]-L-cysteine + [acceptor protein]-L-lysine = [E2 ubiquitin-conjugating enzyme]-L-cysteine + N(6)-ubiquitinyl-[acceptor protein]-L-lysine.. E3 ubiquitin-protein ligase which promotes ubiquitination and subsequent degradation of host MHC-I and CD4 molecules, presumably to prevent lysis of infected cells by cytotoxic T-lymphocytes and NK cell. Binds target molecules through transmembrane interaction. The result of this ubiquitination is the enhancement of the endocytosis of the target chain and the delivery to the lysosome, where it is proteolytically destroyed. The protein is E3 ubiquitin-protein ligase LAP of Oryctolagus cuniculus (Rabbit).